We begin with the raw amino-acid sequence, 245 residues long: Octopine transport system permease protein OccM (245 aa).

Helical transmembrane passes span 12–32 (FIALLAGIPLALKLAVFSIAV), 57–77 (FYIFAFRGTPLLVQIYIIYYG), 96–116 (AYWCALGALALNTAAYSAEIM), 163–183 (VLMVKSTSLASTITLMEITGI), and 199–219 (ACAGAIYLTMNFIAARLFALI). The 198-residue stretch at 19 to 216 (IPLALKLAVF…TMNFIAARLF (198 aa)) folds into the ABC transmembrane type-1 domain.

Belongs to the binding-protein-dependent transport system permease family. HisMQ subfamily.

It localises to the cell inner membrane. Its function is as follows. Component of the octopine active transport system probably consisting of four subunits: Q, M, P and T. The protein is Octopine transport system permease protein OccM (occM) of Rhizobium meliloti (Ensifer meliloti).